We begin with the raw amino-acid sequence, 207 residues long: MADILTQLQTCLDQLATQFYATIGYLSTYHDNSPAIPPPDVPDAAPALAKIPKNSTAPPVPAGAPVPALSQASPPAQNPAHGAAGAGTSVGEGAQTPGPAAGAGADPNLPAPDSPRTFASRQRELARDLIIKEQQIEYLISVLPGIDSSEAEQEKRIRELEGELRQVEEERELKMRELKRLRRTLENVLTAVETGLYGDRELLEKYA.

The segment at 36–120 is disordered; the sequence is IPPPDVPDAA…APDSPRTFAS (85 aa). The span at 91 to 108 shows a compositional bias: low complexity; sequence GEGAQTPGPAAGAGADPN. Positions 146 to 194 form a coiled coil; sequence IDSSEAEQEKRIRELEGELRQVEEERELKMRELKRLRRTLENVLTAVET.

This sequence belongs to the Mediator complex subunit 21 family. As to quaternary structure, component of the Mediator complex.

Its subcellular location is the nucleus. Functionally, component of the Mediator complex, a coactivator involved in the regulated transcription of nearly all RNA polymerase II-dependent genes. Mediator functions as a bridge to convey information from gene-specific regulatory proteins to the basal RNA polymerase II transcription machinery. Mediator is recruited to promoters by direct interactions with regulatory proteins and serves as a scaffold for the assembly of a functional preinitiation complex with RNA polymerase II and the general transcription factors. The chain is Mediator of RNA polymerase II transcription subunit 21 (srb7) from Aspergillus fumigatus (strain ATCC MYA-4609 / CBS 101355 / FGSC A1100 / Af293) (Neosartorya fumigata).